The following is a 117-amino-acid chain: Large ribosomal subunit protein uL18 (117 aa).

The protein belongs to the universal ribosomal protein uL18 family. In terms of assembly, part of the 50S ribosomal subunit; part of the 5S rRNA/L5/L18/L25 subcomplex. Contacts the 5S and 23S rRNAs.

Its function is as follows. This is one of the proteins that bind and probably mediate the attachment of the 5S RNA into the large ribosomal subunit, where it forms part of the central protuberance. The polypeptide is Large ribosomal subunit protein uL18 (Polynucleobacter necessarius subsp. necessarius (strain STIR1)).